The following is a 138-amino-acid chain: Large ribosomal subunit protein bL17 (138 aa).

The protein belongs to the bacterial ribosomal protein bL17 family. Part of the 50S ribosomal subunit. Contacts protein L32.

This is Large ribosomal subunit protein bL17 from Bradyrhizobium diazoefficiens (strain JCM 10833 / BCRC 13528 / IAM 13628 / NBRC 14792 / USDA 110).